The primary structure comprises 277 residues: Urease accessory protein UreD (277 aa).

It belongs to the UreD family. In terms of assembly, ureD, UreF and UreG form a complex that acts as a GTP-hydrolysis-dependent molecular chaperone, activating the urease apoprotein by helping to assemble the nickel containing metallocenter of UreC. The UreE protein probably delivers the nickel.

Its subcellular location is the cytoplasm. Required for maturation of urease via the functional incorporation of the urease nickel metallocenter. The chain is Urease accessory protein UreD from Pseudomonas putida (strain W619).